The primary structure comprises 276 residues: Aldo-keto reductase Mkms_1985 (276 aa).

Y50 acts as the Proton donor in catalysis. NADPH contacts are provided by L190, I228, K230, S231, V232, R236, S239, and N240. The segment at 257-276 is disordered; that stretch reads SSLEDGSRLGPDPKTFNFTG.

Belongs to the aldo/keto reductase family.

The protein is Aldo-keto reductase Mkms_1985 of Mycobacterium sp. (strain KMS).